A 188-amino-acid polypeptide reads, in one-letter code: Early nodulin-like protein 5 (188 aa).

Residues 1–24 (MDSSKKIIIVMFLVTFYMFSCVSS) form the signal peptide. The region spanning 25 to 128 (TEFEVGGENG…GQKMIVKVME (104 aa)) is the Phytocyanin domain. A disulfide bridge links Cys82 with Cys116. Positions 127–157 (METESSTESPPPSSSSSSSSSSSLPASTPKA) are disordered. The segment covering 129–155 (TESSTESPPPSSSSSSSSSSSLPASTP) has biased composition (low complexity). Ser170 carries GPI-anchor amidated serine lipidation. Residues 171–188 (SSGFVVSAVLIVSVFGLV) constitute a propeptide, removed in mature form.

This sequence belongs to the early nodulin-like (ENODL) family. In terms of tissue distribution, mostly expressed in leaves and flowers, and, to a lower extent, in stems.

The protein resides in the cell membrane. Functionally, may act as a carbohydrate transporter. Mainly required for reproductive functions. This chain is Early nodulin-like protein 5, found in Arabidopsis thaliana (Mouse-ear cress).